We begin with the raw amino-acid sequence, 416 residues long: MIDLKLLEKDFENVSKRLKLKGVDENNLEEIKKLFKEKKEIKTTLDKLLEQRNILSKQIGNFMKNGEKDKAEEIKKEVNSLKEEISVLEEKLKTIEDSLLQKALVIPNIPDEDVPIGKDEDENVEIKRVGEIPTFDFEPKPHDELGEKLDWLDFTRGVKLAKSRFTVMKKDAARLERALINFFLDHNREWGFEEVYVPFMVNRETMTGTGQLPKFEEDLFKIENEELYLIPTAEVPLTNLFRDEIITNLDEPIKLTAYTPCFRKEAGSYGKDTKGIIRQHQFDKVELVAITKPEDSDKMFDEMVACASNALEKLGLPYRQLMLCTGDLGFSAAKTIDLEVWIPSQNKYREISSVSNTRDFQARRAKIRYKDGKKNKLVHTLNGSSLAVGRTLVAIMENYQTKDGNIQIPEALKKYL.

Position 232-234 (232-234) interacts with L-serine; the sequence is TAE. Position 263-265 (263-265) interacts with ATP; that stretch reads RKE. E286 provides a ligand contact to L-serine. 350–353 contributes to the ATP binding site; it reads EISS. S384 serves as a coordination point for L-serine.

Belongs to the class-II aminoacyl-tRNA synthetase family. Type-1 seryl-tRNA synthetase subfamily. In terms of assembly, homodimer. The tRNA molecule binds across the dimer.

The protein localises to the cytoplasm. The enzyme catalyses tRNA(Ser) + L-serine + ATP = L-seryl-tRNA(Ser) + AMP + diphosphate + H(+). It carries out the reaction tRNA(Sec) + L-serine + ATP = L-seryl-tRNA(Sec) + AMP + diphosphate + H(+). Its pathway is aminoacyl-tRNA biosynthesis; selenocysteinyl-tRNA(Sec) biosynthesis; L-seryl-tRNA(Sec) from L-serine and tRNA(Sec): step 1/1. In terms of biological role, catalyzes the attachment of serine to tRNA(Ser). Is also able to aminoacylate tRNA(Sec) with serine, to form the misacylated tRNA L-seryl-tRNA(Sec), which will be further converted into selenocysteinyl-tRNA(Sec). This chain is Serine--tRNA ligase, found in Nautilia profundicola (strain ATCC BAA-1463 / DSM 18972 / AmH).